A 226-amino-acid chain; its full sequence is Enolase-phosphatase E1 (226 aa).

Mg(2+)-binding residues include D9 and E11. Substrate is bound by residues S115 to S116 and K160. D185 is a binding site for Mg(2+).

It belongs to the HAD-like hydrolase superfamily. MasA/MtnC family. As to quaternary structure, monomer. Requires Mg(2+) as cofactor.

It is found in the cytoplasm. The protein localises to the nucleus. It catalyses the reaction 5-methylsulfanyl-2,3-dioxopentyl phosphate + H2O = 1,2-dihydroxy-5-(methylsulfanyl)pent-1-en-3-one + phosphate. Its pathway is amino-acid biosynthesis; L-methionine biosynthesis via salvage pathway; L-methionine from S-methyl-5-thio-alpha-D-ribose 1-phosphate: step 3/6. It participates in amino-acid biosynthesis; L-methionine biosynthesis via salvage pathway; L-methionine from S-methyl-5-thio-alpha-D-ribose 1-phosphate: step 4/6. Its function is as follows. Bifunctional enzyme that catalyzes the enolization of 2,3-diketo-5-methylthiopentyl-1-phosphate (DK-MTP-1-P) into the intermediate 2-hydroxy-3-keto-5-methylthiopentenyl-1-phosphate (HK-MTPenyl-1-P), which is then dephosphorylated to form the acireductone 1,2-dihydroxy-3-keto-5-methylthiopentene (DHK-MTPene). The sequence is that of Enolase-phosphatase E1 from Zygosaccharomyces rouxii (strain ATCC 2623 / CBS 732 / NBRC 1130 / NCYC 568 / NRRL Y-229).